The sequence spans 316 residues: Ribosomal RNA small subunit methyltransferase H (316 aa).

Residues 35–37 (AGH), Asp-55, Phe-84, Asp-105, and Gln-112 contribute to the S-adenosyl-L-methionine site.

Belongs to the methyltransferase superfamily. RsmH family.

The protein localises to the cytoplasm. It catalyses the reaction cytidine(1402) in 16S rRNA + S-adenosyl-L-methionine = N(4)-methylcytidine(1402) in 16S rRNA + S-adenosyl-L-homocysteine + H(+). Its function is as follows. Specifically methylates the N4 position of cytidine in position 1402 (C1402) of 16S rRNA. This chain is Ribosomal RNA small subunit methyltransferase H, found in Streptococcus thermophilus (strain ATCC BAA-250 / LMG 18311).